We begin with the raw amino-acid sequence, 257 residues long: Probable pectate lyase G (257 aa).

The first 24 residues, 1-24 (MPVLSKLLPTLTLTLPLLAGPCLA), serve as a signal peptide directing secretion.

The protein belongs to the polysaccharide lyase 3 family. Ca(2+) is required as a cofactor.

Its subcellular location is the secreted. The enzyme catalyses Eliminative cleavage of (1-&gt;4)-alpha-D-galacturonan to give oligosaccharides with 4-deoxy-alpha-D-galact-4-enuronosyl groups at their non-reducing ends.. In terms of biological role, pectinolytic enzyme consist of four classes of enzymes: pectin lyase, polygalacturonase, pectin methylesterase and rhamnogalacturonase. Among pectinolytic enzymes, pectin lyase is the most important in depolymerization of pectin, since it cleaves internal glycosidic bonds of highly methylated pectins. Favors pectate, the anion, over pectin, the methyl ester. The sequence is that of Probable pectate lyase G (plyG) from Emericella nidulans (strain FGSC A4 / ATCC 38163 / CBS 112.46 / NRRL 194 / M139) (Aspergillus nidulans).